The following is a 249-amino-acid chain: Acetylglutamate kinase (249 aa).

Substrate contacts are provided by residues 38 to 39, Arg-60, and Asn-147; that span reads GG.

The protein belongs to the acetylglutamate kinase family. ArgB subfamily.

The protein localises to the cytoplasm. The catalysed reaction is N-acetyl-L-glutamate + ATP = N-acetyl-L-glutamyl 5-phosphate + ADP. It functions in the pathway amino-acid biosynthesis; L-arginine biosynthesis; N(2)-acetyl-L-ornithine from L-glutamate: step 2/4. Catalyzes the ATP-dependent phosphorylation of N-acetyl-L-glutamate. The chain is Acetylglutamate kinase from Deinococcus radiodurans (strain ATCC 13939 / DSM 20539 / JCM 16871 / CCUG 27074 / LMG 4051 / NBRC 15346 / NCIMB 9279 / VKM B-1422 / R1).